Reading from the N-terminus, the 362-residue chain is Putative F-box/kelch-repeat protein At3g20710 (362 aa).

An F-box domain is found at M1 to A50. 2 Kelch repeats span residues Y150 to N201 and I293 to S341.

This Arabidopsis thaliana (Mouse-ear cress) protein is Putative F-box/kelch-repeat protein At3g20710.